A 239-amino-acid chain; its full sequence is tRNA (guanine-N(1)-)-methyltransferase (239 aa).

S-adenosyl-L-methionine is bound by residues Gly-109 and Ile-128 to Leu-133.

The protein belongs to the RNA methyltransferase TrmD family. As to quaternary structure, homodimer.

The protein localises to the cytoplasm. The enzyme catalyses guanosine(37) in tRNA + S-adenosyl-L-methionine = N(1)-methylguanosine(37) in tRNA + S-adenosyl-L-homocysteine + H(+). Specifically methylates guanosine-37 in various tRNAs. The sequence is that of tRNA (guanine-N(1)-)-methyltransferase from Thermus thermophilus (strain ATCC BAA-163 / DSM 7039 / HB27).